The following is a 679-amino-acid chain: Single-strand DNA endonuclease ASTE1 (679 aa).

The interaction with SHLD2 stretch occupies residues Thr351–Leu400. A disordered region spans residues Arg625 to Gly645. The span at Ser626–Lys635 shows a compositional bias: basic residues.

It belongs to the asteroid family. As to quaternary structure, interacts with SHLD1, SHLD2, SHLD3, RIF1 and MAD2L2/REV7.

Functionally, structure-specific DNA endonuclease that specifically cleaves single-stranded DNA and 3' overhang DNA. Contributes to the control of DNA double-strand break repair choice by antagonizing BRCA1-dependent homologous recombination (HR) and promoting non-homologous end-joining (NHEJ). Recruited to the single-stranded DNA ends by SHLD2 and cleaves the 3' exposed DNA ends, therefore inhibiting DNA end resection (necessary for HR) and promoting DNA end protection (necessary for NHEJ). This Pongo abelii (Sumatran orangutan) protein is Single-strand DNA endonuclease ASTE1 (ASTE1).